We begin with the raw amino-acid sequence, 278 residues long: Envelope glycoprotein L (278 aa).

The N-terminal stretch at 1–30 is a signal peptide; it reads MCRRPDCGFSFSPGPVILLWCCLLLPIVSS. The 214-residue stretch at 43–256 folds into the gL betaherpesvirus-type domain; that stretch reads VPAECPELTR…DKYYAGLPPE (214 aa). The cysteines at positions 154 and 159 are disulfide-linked.

It belongs to the herpesviridae glycoprotein L (gL) family. Betaherpesvirinae gL subfamily. As to quaternary structure, interacts with glycoprotein H (gH); this interaction is necessary for the correct processing and cell surface expression of gH. Forms the envelope pentamer complex (PC) composed of gH, gL, UL128, UL130, and UL131A. The pentamer interacts with host NRP2. Forms the envelope trimer complex composed of gH, gL, and gO. The trimer interacts with host PDGFRA. The trimer also interacts with host EPHA2.

The protein localises to the virion membrane. It localises to the host cell membrane. Its subcellular location is the host Golgi apparatus. The protein resides in the host trans-Golgi network. Its function is as follows. The heterodimer glycoprotein H-glycoprotein L is required for the fusion of viral and plasma membranes leading to virus entry into the host cell. Acts as a functional inhibitor of gH and maintains gH in an inhibited form. Upon binding to host integrins, gL dissociates from gH leading to activation of the viral fusion glycoproteins gB and gH. In human cytomegalovirus, forms two distincts complexes to mediate viral entry, a trimer and a pentamer at the surface of the virion envelope. The gH-gL-gO trimer is required for infection in fibroblasts by interacting with host PDGFRA, and in glioblastoma cells by interacting with host EPHA2. The gH-gL-UL128-UL130-UL131A pentamer is essential for viral entry in epithelial, endothelial and myeloid cells via interaction with host NRP2. This chain is Envelope glycoprotein L, found in Homo sapiens (Human).